A 127-amino-acid chain; its full sequence is Small ribosomal subunit protein uS11 (127 aa).

The protein belongs to the universal ribosomal protein uS11 family. Part of the 30S ribosomal subunit. Interacts with proteins S7 and S18. Binds to IF-3.

Its function is as follows. Located on the platform of the 30S subunit, it bridges several disparate RNA helices of the 16S rRNA. Forms part of the Shine-Dalgarno cleft in the 70S ribosome. This is Small ribosomal subunit protein uS11 from Streptococcus thermophilus (strain CNRZ 1066).